A 386-amino-acid polypeptide reads, in one-letter code: MAAVETRECETEGCHSEAKLQCPTCIKLGIQGSYFCSQECFKGSWATHKLLHKKAKEDKTNDEEKNCVEKEVNTDPWPGYRYTGKLRPYYPLTPMRLVPSNIQRPDYADHPLGMSESEQTMKGTSQIKILNAEEIEGMRVVCKLAREVLDIAAMMVKPGVTTEEIDHAVHLACTARNCYPSPLNYYNFPKSCCTSVNEVICHGIPDRRHLQEGDILNIDITVYHNGYHGDLNETFFVGEVDEGAKRLVQTTYECLMQAIDSVKPGIRYRELGNIIQKHAQANGFSVVRSYCGHGIHKLFHTAPNVPHYAKNKAVGVMKPGHVFTIEPMICEGGWQDETWPDGWTAVTRDGKRSAQFEHTLLVTETGCEILTRRLEDNGRAHFLSQM.

The segment at 6–59 adopts a C6H2-type zinc-finger fold; sequence TRECETEGCHSEAKLQCPTCIKLGIQGSYFCSQECFKGSWATHKLLHKKAKEDK. Residues cysteine 9, cysteine 14, cysteine 22, cysteine 25, cysteine 36, cysteine 40, histidine 48, and histidine 52 each contribute to the Zn(2+) site. Histidine 202 contributes to the a protein binding site. Zn(2+) is bound by residues aspartate 219, aspartate 230, and histidine 293. An a protein-binding site is contributed by histidine 300. Zn(2+) contacts are provided by glutamate 326 and glutamate 357.

This sequence belongs to the peptidase M24A family. Methionine aminopeptidase type 1 subfamily. In terms of assembly, associates with the 60S ribosomal subunit of the 80S translational complex. Zn(2+) serves as cofactor. It depends on Co(2+) as a cofactor. Requires Mn(2+) as cofactor. Fe(2+) is required as a cofactor.

It is found in the cytoplasm. It carries out the reaction Release of N-terminal amino acids, preferentially methionine, from peptides and arylamides.. Functionally, cotranslationally removes the N-terminal methionine from nascent proteins. The N-terminal methionine is often cleaved when the second residue in the primary sequence is small and uncharged (Met-Ala-, Cys, Gly, Pro, Ser, Thr, or Val). The sequence is that of Methionine aminopeptidase 1 (metap1) from Danio rerio (Zebrafish).